The sequence spans 120 residues: MFKLFNQASRIFFGIALPCLIFLGGIFSLGNTALAADLAHGKAIFAGNCAACHNGGLNAINPSKTLKMADLEANGKNSVAAIVAQITNGNGAMPGFKGRISDSDMEDVAAYVLDQAEKGW.

The signal sequence occupies residues 1–35 (MFKLFNQASRIFFGIALPCLIFLGGIFSLGNTALA). Residues cysteine 49, cysteine 52, histidine 53, and methionine 93 each coordinate heme c.

This sequence belongs to the cytochrome c family. PetJ subfamily. In terms of assembly, monomer. Binds 1 heme c group covalently per subunit.

The protein localises to the cellular thylakoid lumen. Functions as an electron carrier between membrane-bound cytochrome b6-f and photosystem I in oxygenic photosynthesis. The polypeptide is Cytochrome c6 (petJ) (Synechocystis sp. (strain ATCC 27184 / PCC 6803 / Kazusa)).